A 135-amino-acid chain; its full sequence is UPF0299 membrane protein ECA2828 (135 aa).

4 helical membrane-spanning segments follow: residues phenylalanine 5–glycine 25, alanine 30–leucine 50, glycine 63–methionine 83, and phenylalanine 93–phenylalanine 113.

The protein belongs to the UPF0299 family.

Its subcellular location is the cell inner membrane. This Pectobacterium atrosepticum (strain SCRI 1043 / ATCC BAA-672) (Erwinia carotovora subsp. atroseptica) protein is UPF0299 membrane protein ECA2828.